The following is an 800-amino-acid chain: Putative antiporter subunit mnhA2 (800 aa).

21 helical membrane passes run 3 to 23 (LVYL…TLFI), 29 to 49 (FAGY…LAQI), 78 to 98 (GLGL…FFYA), 109 to 129 (LPRF…IVVS), 133 to 153 (ILMY…ISYW), 167 to 187 (FIIT…LYII), 202 to 222 (SISE…GAFT), 249 to 269 (SATM…ILGL), 273 to 293 (YIYI…VTAL), 300 to 320 (GILA…VGLG), 337 to 357 (LILF…CALF), 387 to 407 (LVMT…GFLS), 428 to 448 (LTII…VYAV), 472 to 492 (PWLF…IFFI), 527 to 547 (GVNL…ILAL), 596 to 616 (IITV…VGLP), 627 to 647 (GPLE…LVFI), 651 to 671 (LTMV…FLLM), 676 to 696 (LALT…VSFS), 712 to 732 (TIKI…IFIA), and 768 to 788 (LDTM…YTLL).

It belongs to the CPA3 antiporters (TC 2.A.63) subunit A family. May form a heterooligomeric complex that consists of seven subunits: mnhA2, mnhB2, mnhC2, mnhD2, mnhE2, mnhF2 and mnhG2.

It localises to the cell membrane. The polypeptide is Putative antiporter subunit mnhA2 (mnhA2) (Staphylococcus haemolyticus (strain JCSC1435)).